The sequence spans 435 residues: Exopolysaccharide production protein ExoQ (435 aa).

10 helical membrane passes run 11–31 (PGAN…VFAY), 35–55 (FGQV…LVDY), 65–85 (YLWI…SAAP), 117–137 (GMIA…TYHY), 156–176 (LGFY…VLGE), 178–198 (GLWM…LLTS), 203–223 (SVLT…ITAL), 230–250 (LLFI…IYAG), 325–345 (VVET…TAFF), and 361–381 (MVLF…IDIL).

It localises to the cell membrane. It functions in the pathway glycan metabolism; exopolysaccharide biosynthesis. Its function is as follows. Involved in the production of exopolysaccharide. This is Exopolysaccharide production protein ExoQ (exoQ) from Rhizobium meliloti (strain 1021) (Ensifer meliloti).